A 358-amino-acid chain; its full sequence is Phospho-N-acetylmuramoyl-pentapeptide-transferase (358 aa).

10 consecutive transmembrane segments (helical) span residues 24–44, 73–93, 95–115, 134–154, 169–189, 197–217, 233–253, 261–281, 286–306, and 335–355; these read FRSI…GPWV, TMGG…WADL, NVFI…GFVD, MFWQ…LPGF, ELGI…SNAV, GLAI…CYIA, GAGE…GFLW, VFMG…LAVL, ILLV…IFQV, and KIIV…ISTL.

The protein belongs to the glycosyltransferase 4 family. MraY subfamily. It depends on Mg(2+) as a cofactor.

The protein resides in the cell inner membrane. The enzyme catalyses UDP-N-acetyl-alpha-D-muramoyl-L-alanyl-gamma-D-glutamyl-meso-2,6-diaminopimeloyl-D-alanyl-D-alanine + di-trans,octa-cis-undecaprenyl phosphate = di-trans,octa-cis-undecaprenyl diphospho-N-acetyl-alpha-D-muramoyl-L-alanyl-D-glutamyl-meso-2,6-diaminopimeloyl-D-alanyl-D-alanine + UMP. The protein operates within cell wall biogenesis; peptidoglycan biosynthesis. Catalyzes the initial step of the lipid cycle reactions in the biosynthesis of the cell wall peptidoglycan: transfers peptidoglycan precursor phospho-MurNAc-pentapeptide from UDP-MurNAc-pentapeptide onto the lipid carrier undecaprenyl phosphate, yielding undecaprenyl-pyrophosphoryl-MurNAc-pentapeptide, known as lipid I. In Citrifermentans bemidjiense (strain ATCC BAA-1014 / DSM 16622 / JCM 12645 / Bem) (Geobacter bemidjiensis), this protein is Phospho-N-acetylmuramoyl-pentapeptide-transferase.